Reading from the N-terminus, the 465-residue chain is DEAD-box ATP-dependent RNA helicase 55 (465 aa).

The Q motif signature appears at phenylalanine 17–alanine 45. The 172-residue stretch at isoleucine 48–lysine 219 folds into the Helicase ATP-binding domain. Alanine 61 to threonine 68 contributes to the ATP binding site. A DEAD box motif is present at residues aspartate 167–aspartate 170. Positions glutamine 228 to glycine 422 constitute a Helicase C-terminal domain. A disordered region spans residues lysine 413–leucine 465. Residues serine 428–lysine 437 show a composition bias toward basic and acidic residues. Acidic residues predominate over residues glutamine 456–leucine 465.

This sequence belongs to the DEAD box helicase family. DDX55/SPB4 subfamily.

The catalysed reaction is ATP + H2O = ADP + phosphate + H(+). This chain is DEAD-box ATP-dependent RNA helicase 55 (RH55), found in Arabidopsis thaliana (Mouse-ear cress).